The primary structure comprises 355 residues: 6-aminohexanoate-oligomer endohydrolase (355 aa).

T267 acts as the Nucleophile in catalysis.

The protein belongs to the peptidase S58 family. As to quaternary structure, heterotetramer composed of 4 alpha/beta heterodimers. In terms of processing, expressed as an inactive precursor that is cleaved autocatalytically at Asn266/Thr267 to generate an active enzyme composed of an alpha subunit and a beta subunit.

The enzyme catalyses [N-(6-aminohexanoyl)]n + H2O = [N-(6-aminohexanoyl)]n-x + [N-(6-aminohexanoyl)]x.. It participates in xenobiotic degradation; nylon-6 oligomer degradation. Involved in the degradation of nylon-6 oligomers. Degrades cyclic and linear oligomers of 6-aminohexanoate (Ahx) with a degree of polymerization greater than three by an endo-type mode. Cannot use Ahx cyclic dimer or the Ahx linear dimer. The sequence is that of 6-aminohexanoate-oligomer endohydrolase from Agromyces sp. (strain KY5R).